A 107-amino-acid polypeptide reads, in one-letter code: Nucleoid-associated protein XF_1808 (107 aa).

This sequence belongs to the YbaB/EbfC family. Homodimer.

It localises to the cytoplasm. It is found in the nucleoid. Binds to DNA and alters its conformation. May be involved in regulation of gene expression, nucleoid organization and DNA protection. The chain is Nucleoid-associated protein XF_1808 from Xylella fastidiosa (strain 9a5c).